The chain runs to 462 residues: ATP synthase subunit beta (462 aa).

Position 152–159 (152–159 (GGAGVGKT)) interacts with ATP.

It belongs to the ATPase alpha/beta chains family. F-type ATPases have 2 components, CF(1) - the catalytic core - and CF(0) - the membrane proton channel. CF(1) has five subunits: alpha(3), beta(3), gamma(1), delta(1), epsilon(1). CF(0) has three main subunits: a(1), b(2) and c(9-12). The alpha and beta chains form an alternating ring which encloses part of the gamma chain. CF(1) is attached to CF(0) by a central stalk formed by the gamma and epsilon chains, while a peripheral stalk is formed by the delta and b chains.

It is found in the cell inner membrane. It carries out the reaction ATP + H2O + 4 H(+)(in) = ADP + phosphate + 5 H(+)(out). In terms of biological role, produces ATP from ADP in the presence of a proton gradient across the membrane. The catalytic sites are hosted primarily by the beta subunits. In Tolumonas auensis (strain DSM 9187 / NBRC 110442 / TA 4), this protein is ATP synthase subunit beta.